A 509-amino-acid chain; its full sequence is Dihydrolipoyl dehydrogenase, mitochondrial (509 aa).

The N-terminal 35 residues, 1–35 (MQSWSRVYCSLAKRGHFNRISHGLQGVSSVPLRTY), are a transit peptide targeting the mitochondrion. Lys-66 is modified (N6-acetyllysine; alternate). Lys-66 bears the N6-succinyllysine; alternate mark. Residues 71–80 (EKNDTLGGTC) and Lys-89 each bind FAD. Cys-80 and Cys-85 are disulfide-bonded. An N6-acetyllysine; alternate mark is found at Lys-122, Lys-132, and Lys-143. N6-succinyllysine; alternate is present on residues Lys-122, Lys-132, and Lys-143. Gly-154 contributes to the FAD binding site. N6-succinyllysine is present on residues Lys-159 and Lys-166. 183–185 (TGS) is an FAD binding site. NAD(+) is bound by residues 220-227 (GAGVIGVE) and Glu-243. An N6-succinyllysine mark is found at Lys-273 and Lys-277. Val-278 serves as a coordination point for NAD(+). Phosphoserine is present on residues Ser-285 and Ser-297. Position 314 (Gly-314) interacts with NAD(+). Lys-346 carries the N6-acetyllysine modification. FAD is bound by residues Asp-355 and 361 to 364 (MLAH). At Lys-410 the chain carries N6-acetyllysine; alternate. Lys-410 is modified (N6-succinyllysine; alternate). 2 positions are modified to N6-acetyllysine: Lys-417 and Lys-420. At Lys-430 the chain carries N6-succinyllysine. The active-site Proton acceptor is the His-487. A Phosphoserine modification is found at Ser-502. Position 505 is an N6-acetyllysine; alternate (Lys-505). An N6-succinyllysine; alternate modification is found at Lys-505.

The protein belongs to the class-I pyridine nucleotide-disulfide oxidoreductase family. As to quaternary structure, homodimer. Part of the multimeric pyruvate dehydrogenase complex that contains multiple copies of pyruvate dehydrogenase (subunits PDHA (PDHA1 or PDHA2) and PDHB, E1), dihydrolipoamide acetyltransferase (DLAT, E2) and lipoamide dehydrogenase (DLD, E3). These subunits are bound to an inner core composed of about 48 DLAT and 12 PDHX molecules (by non covalent bonds). The 2-oxoglutarate dehydrogenase complex is composed of OGDH (2-oxoglutarate dehydrogenase; E1), DLST (dihydrolipoamide succinyltransferase; E2), DLD (dihydrolipoamide dehydrogenase; E3) and the assembly factor KGD4. It contains multiple copies of the three enzymatic components (E1, E2 and E3). In the nucleus, the 2-oxoglutarate dehydrogenase complex associates with KAT2A. Interacts with PDHX. FAD is required as a cofactor. Post-translationally, tyrosine phosphorylated.

Its subcellular location is the mitochondrion matrix. The protein localises to the nucleus. The protein resides in the cell projection. It is found in the cilium. It localises to the flagellum. Its subcellular location is the cytoplasmic vesicle. The protein localises to the secretory vesicle. The protein resides in the acrosome. The catalysed reaction is N(6)-[(R)-dihydrolipoyl]-L-lysyl-[protein] + NAD(+) = N(6)-[(R)-lipoyl]-L-lysyl-[protein] + NADH + H(+). Its function is as follows. Lipoamide dehydrogenase is a component of the glycine cleavage system as well as an E3 component of three alpha-ketoacid dehydrogenase complexes (pyruvate-, alpha-ketoglutarate-, and branched-chain amino acid-dehydrogenase complex). The 2-oxoglutarate dehydrogenase complex is mainly active in the mitochondrion. A fraction of the 2-oxoglutarate dehydrogenase complex also localizes in the nucleus and is required for lysine succinylation of histones: associates with KAT2A on chromatin and provides succinyl-CoA to histone succinyltransferase KAT2A. In monomeric form may have additional moonlighting function as serine protease. Involved in the hyperactivation of spermatazoa during capacitation and in the spermatazoal acrosome reaction. The sequence is that of Dihydrolipoyl dehydrogenase, mitochondrial (DLD) from Cricetulus griseus (Chinese hamster).